The primary structure comprises 292 residues: tRNA-cytidine(32) 2-sulfurtransferase (292 aa).

The PP-loop motif motif lies at S62–S67. The [4Fe-4S] cluster site is built by C137, C140, and C228.

It belongs to the TtcA family. In terms of assembly, homodimer. The cofactor is Mg(2+). Requires [4Fe-4S] cluster as cofactor.

It is found in the cytoplasm. The enzyme catalyses cytidine(32) in tRNA + S-sulfanyl-L-cysteinyl-[cysteine desulfurase] + AH2 + ATP = 2-thiocytidine(32) in tRNA + L-cysteinyl-[cysteine desulfurase] + A + AMP + diphosphate + H(+). It functions in the pathway tRNA modification. Functionally, catalyzes the ATP-dependent 2-thiolation of cytidine in position 32 of tRNA, to form 2-thiocytidine (s(2)C32). The sulfur atoms are provided by the cysteine/cysteine desulfurase (IscS) system. This chain is tRNA-cytidine(32) 2-sulfurtransferase, found in Brucella anthropi (strain ATCC 49188 / DSM 6882 / CCUG 24695 / JCM 21032 / LMG 3331 / NBRC 15819 / NCTC 12168 / Alc 37) (Ochrobactrum anthropi).